Here is a 202-residue protein sequence, read N- to C-terminus: Pyridoxal 5'-phosphate synthase subunit PdxT (202 aa).

50 to 52 (GES) provides a ligand contact to L-glutamine. The active-site Nucleophile is Cys82. Residues Arg111 and 140–141 (IR) each bind L-glutamine. Catalysis depends on charge relay system residues His176 and Glu178.

It belongs to the glutaminase PdxT/SNO family. As to quaternary structure, in the presence of PdxS, forms a dodecamer of heterodimers. Only shows activity in the heterodimer.

It carries out the reaction aldehydo-D-ribose 5-phosphate + D-glyceraldehyde 3-phosphate + L-glutamine = pyridoxal 5'-phosphate + L-glutamate + phosphate + 3 H2O + H(+). The catalysed reaction is L-glutamine + H2O = L-glutamate + NH4(+). It participates in cofactor biosynthesis; pyridoxal 5'-phosphate biosynthesis. Catalyzes the hydrolysis of glutamine to glutamate and ammonia as part of the biosynthesis of pyridoxal 5'-phosphate. The resulting ammonia molecule is channeled to the active site of PdxS. In Streptomyces coelicolor (strain ATCC BAA-471 / A3(2) / M145), this protein is Pyridoxal 5'-phosphate synthase subunit PdxT.